The sequence spans 460 residues: Glucan endo-1,3-beta-D-glucosidase (460 aa).

The first 26 residues, 1-26 (MAANVQTSSLLFLVFLLLQNFYSANS), serve as a signal peptide directing secretion. Glutamate 123 (proton donor) is an active-site residue. The active-site Nucleophile is glutamate 268. A disordered region spans residues 352–371 (NTQNPTTPATPTPTPKAAGS). An N-linked (GlcNAc...) asparagine glycan is attached at asparagine 355. Cysteine 373 and cysteine 435 form a disulfide bridge. The N-linked (GlcNAc...) asparagine glycan is linked to asparagine 447.

This sequence belongs to the glycosyl hydrolase 17 family. In terms of assembly, homodimer. Post-translationally, glycosylated. In terms of processing, contains two additional disulfide bonds, but it is unclear if they are between the pairs Cys-392-Cys-398 and Cys-407-Cys-453 (PudMed:18096638) or between the pairs Cys-392-Cys-453 and Cys-398-Cys-407 (PudMed:12392450). Expressed only in pollen.

The protein resides in the secreted. It carries out the reaction Hydrolysis of (1-&gt;3)-beta-D-glucosidic linkages in (1-&gt;3)-beta-D-glucans.. The chain is Glucan endo-1,3-beta-D-glucosidase (OLE9) from Olea europaea (Common olive).